Here is a 380-residue protein sequence, read N- to C-terminus: Cytosolic acyl coenzyme A thioester hydrolase (380 aa).

The region spanning 50 to 168 (PCGACITGRI…TLWYVPLSLK (119 aa)) is the HotDog ACOT-type 1 domain. Residue Asn-66 is part of the active site. Lys-168 and Lys-198 each carry N6-acetyllysine. The HotDog ACOT-type 2 domain occupies 224 to 338 (SYSQSSLIHL…FFTYVSLSQE (115 aa)). The active site involves Asp-255. Residue Lys-283 is modified to N6-acetyllysine. Positions 350 to 380 (ETEDEKKRFEEGKGRYLQMKAKRQGHAEPQP) are disordered. Over residues 353–363 (DEKKRFEEGKG) the composition is skewed to basic and acidic residues.

In terms of assembly, homohexamer. As to expression, isoform 4 is expressed exclusively in brain.

The protein localises to the cytoplasm. It is found in the cytosol. It localises to the mitochondrion. The enzyme catalyses hexadecanoyl-CoA + H2O = hexadecanoate + CoA + H(+). It carries out the reaction octanoyl-CoA + H2O = octanoate + CoA + H(+). It catalyses the reaction dodecanoyl-CoA + H2O = dodecanoate + CoA + H(+). The catalysed reaction is (9Z)-octadecenoyl-CoA + H2O = (9Z)-octadecenoate + CoA + H(+). The enzyme catalyses tetradecanoyl-CoA + H2O = tetradecanoate + CoA + H(+). It carries out the reaction decanoyl-CoA + H2O = decanoate + CoA + H(+). It catalyses the reaction octadecanoyl-CoA + H2O = octadecanoate + CoA + H(+). Its pathway is lipid metabolism; fatty acid metabolism. Its function is as follows. Catalyzes the hydrolysis of acyl-CoAs into free fatty acids and coenzyme A (CoASH), regulating their respective intracellular levels. Preferentially hydrolyzes palmitoyl-CoA, but has a broad specificity acting on other fatty acyl-CoAs with chain-lengths of C8-C18. May play an important physiological function in brain. The chain is Cytosolic acyl coenzyme A thioester hydrolase (ACOT7) from Homo sapiens (Human).